The chain runs to 320 residues: Aspartate carbamoyltransferase catalytic subunit (320 aa).

Positions 70 and 71 each coordinate carbamoyl phosphate. Lys98 is a binding site for L-aspartate. Carbamoyl phosphate is bound by residues Arg120, His150, and Gln153. Residues Arg184 and Arg239 each contribute to the L-aspartate site. Residues Gly280 and Pro281 each coordinate carbamoyl phosphate.

Belongs to the aspartate/ornithine carbamoyltransferase superfamily. ATCase family. In terms of assembly, heterododecamer (2C3:3R2) of six catalytic PyrB chains organized as two trimers (C3), and six regulatory PyrI chains organized as three dimers (R2).

It carries out the reaction carbamoyl phosphate + L-aspartate = N-carbamoyl-L-aspartate + phosphate + H(+). It functions in the pathway pyrimidine metabolism; UMP biosynthesis via de novo pathway; (S)-dihydroorotate from bicarbonate: step 2/3. Functionally, catalyzes the condensation of carbamoyl phosphate and aspartate to form carbamoyl aspartate and inorganic phosphate, the committed step in the de novo pyrimidine nucleotide biosynthesis pathway. The protein is Aspartate carbamoyltransferase catalytic subunit of Xylella fastidiosa (strain Temecula1 / ATCC 700964).